We begin with the raw amino-acid sequence, 74 residues long: U3-agatoxin-Ao1h (74 aa).

Residues 1 to 20 (MRAIISLLLISTMVFGVIEA) form the signal peptide. Residues 21-34 (VSVQKSLKIFEGER) constitute a propeptide that is removed on maturation. Intrachain disulfides connect Cys37–Cys53, Cys44–Cys58, Cys52–Cys68, and Cys60–Cys66. Asn72 is subject to Asparagine amide.

Belongs to the neurotoxin 07 (Beta/delta-agtx) family. 03 (aga-4) subfamily. Aga sub-subfamily. In terms of tissue distribution, expressed by the venom gland.

The protein resides in the secreted. Its function is as follows. Insecticidal neurotoxin that induces an irreversible spastic paralysis when injected into insects. Modifies presynaptic voltage-gated sodium channels (Nav), causing them to open at the normal resting potential of the nerve. This leads to spontaneous release of neurotransmitter and repetitive action potentials in motor neurons. The chain is U3-agatoxin-Ao1h from Agelena orientalis (Funnel-web spider).